The primary structure comprises 583 residues: Pentatricopeptide repeat-containing protein At3g59040 (583 aa).

10 PPR repeats span residues 138 to 172, 173 to 207, 208 to 242, 246 to 280, 281 to 312, 313 to 347, 348 to 382, 383 to 417, 418 to 452, and 453 to 487; these read SEID…GSTP, NVIS…GPEP, SAIT…KKSP, DQKM…GVPQ, STVT…DIQP, DVVS…GVRP, THKA…RIFP, DLWS…GFEP, NIVT…GIKA, and NQTI…GVPP. The segment at 525–583 is disordered; the sequence is VYGSDDDEEGVEDISSESSDDEDEGDDDDDDARETVLYDKPQEGSLGYGSLQTEELVGL. The segment covering 528-556 has biased composition (acidic residues); that stretch reads SDDDEEGVEDISSESSDDEDEGDDDDDDA. Positions 557-566 are enriched in basic and acidic residues; it reads RETVLYDKPQ.

It belongs to the PPR family. P subfamily.

In Arabidopsis thaliana (Mouse-ear cress), this protein is Pentatricopeptide repeat-containing protein At3g59040.